The following is a 283-amino-acid chain: 1-deoxypentalenic acid 11-beta-hydroxylase (283 aa).

R117 is a binding site for substrate. Fe cation contacts are provided by H135 and D137. Residues 135–137 and W151 each bind 2-oxoglutarate; that span reads HQD. Position 186 (R186) interacts with substrate. Residue H224 participates in Fe cation binding. Residues S226 and R238 each coordinate 2-oxoglutarate. The interval 251-283 is disordered; the sequence is HRGFNALTPWPESAKDASKGIMSKITGTPTTAE.

This sequence belongs to the PhyH family. Fe cation is required as a cofactor. It depends on L-ascorbate as a cofactor.

The enzyme catalyses 1-deoxypentalenate + 2-oxoglutarate + O2 = 1-deoxy-11beta-hydroxypentalenate + succinate + CO2. It functions in the pathway antibiotic biosynthesis; pentalenolactone biosynthesis. Its function is as follows. Catalyzes the conversion of 1-deoxypentalenic acid to 11-beta-hydroxy-1-deoxypentalenic acid in the biosynthesis of pentalenolactone antibiotic. This Streptomyces arenae protein is 1-deoxypentalenic acid 11-beta-hydroxylase (pntH).